A 326-amino-acid chain; its full sequence is Probable cell division protein WhiA (326 aa).

A DNA-binding region (H-T-H motif) is located at residues 275-308 (SLDELGHYADPPMTKDAVAGRIRRLLAMADKRAS).

It belongs to the WhiA family.

Functionally, involved in cell division and chromosome segregation. The protein is Probable cell division protein WhiA of Leifsonia xyli subsp. xyli (strain CTCB07).